The sequence spans 1136 residues: Unconventional myosin-Ib (1136 aa).

One can recognise a Myosin motor domain in the interval 15 to 701; that stretch reads IGVGDTVLLE…TLFQLEDLRK (687 aa). At serine 60 the chain carries Phosphoserine. 108 to 115 contributes to the ATP binding site; sequence GESGAGKT. A Glycyl lysine isopeptide (Lys-Gly) (interchain with G-Cter in SUMO1); alternate cross-link involves residue lysine 287. Lysine 287 participates in a covalent cross-link: Glycyl lysine isopeptide (Lys-Gly) (interchain with G-Cter in SUMO2); alternate. Positions 592-599 are actin-binding; the sequence is YIRCIKPN. IQ domains are found at residues 704–729, 730–750, 750–778, 780–807, 808–837, and 837–866; these read LEDL…LMKR, SQVV…YQQI, IKSS…HQKR, KEAA…DEAR, NKHA…EARR, and RKHA…ANAG. In terms of domain architecture, TH1 spans 952 to 1136; that stretch reads KALYPSSVGQ…NNRLLEVAVP (185 aa).

Belongs to the TRAFAC class myosin-kinesin ATPase superfamily. Myosin family.

In terms of biological role, motor protein that may participate in process critical to neuronal development and function such as cell migration, neurite outgrowth and vesicular transport. The sequence is that of Unconventional myosin-Ib (Myo1b) from Rattus norvegicus (Rat).